The sequence spans 78 residues: Large ribosomal subunit protein bL28 (78 aa).

This sequence belongs to the bacterial ribosomal protein bL28 family.

The polypeptide is Large ribosomal subunit protein bL28 (Glaesserella parasuis serovar 5 (strain SH0165) (Haemophilus parasuis)).